The sequence spans 354 residues: Phospho-N-acetylmuramoyl-pentapeptide-transferase (354 aa).

10 helical membrane passes run 16 to 36 (YITV…LYLM), 66 to 86 (TPTM…LLTV), 88 to 108 (IHNP…AIGV), 130 to 150 (FFLQ…YAHL), 168 to 188 (IFGI…VNLT), 193 to 213 (GLAT…TYIT), 227 to 247 (IIGV…LIGF), 257 to 277 (VFMG…MAII), 282 to 302 (VLLI…IIQV), and 331 to 351 (KIIV…LITL).

The protein belongs to the glycosyltransferase 4 family. MraY subfamily. Mg(2+) serves as cofactor.

It localises to the cell inner membrane. The enzyme catalyses UDP-N-acetyl-alpha-D-muramoyl-L-alanyl-gamma-D-glutamyl-meso-2,6-diaminopimeloyl-D-alanyl-D-alanine + di-trans,octa-cis-undecaprenyl phosphate = di-trans,octa-cis-undecaprenyl diphospho-N-acetyl-alpha-D-muramoyl-L-alanyl-D-glutamyl-meso-2,6-diaminopimeloyl-D-alanyl-D-alanine + UMP. It functions in the pathway cell wall biogenesis; peptidoglycan biosynthesis. Functionally, catalyzes the initial step of the lipid cycle reactions in the biosynthesis of the cell wall peptidoglycan: transfers peptidoglycan precursor phospho-MurNAc-pentapeptide from UDP-MurNAc-pentapeptide onto the lipid carrier undecaprenyl phosphate, yielding undecaprenyl-pyrophosphoryl-MurNAc-pentapeptide, known as lipid I. The protein is Phospho-N-acetylmuramoyl-pentapeptide-transferase of Nitratiruptor sp. (strain SB155-2).